The sequence spans 179 residues: Endoribonuclease YbeY (179 aa).

Zn(2+) is bound by residues His148, His152, and His158.

It belongs to the endoribonuclease YbeY family. Zn(2+) serves as cofactor.

The protein resides in the cytoplasm. In terms of biological role, single strand-specific metallo-endoribonuclease involved in late-stage 70S ribosome quality control and in maturation of the 3' terminus of the 16S rRNA. The polypeptide is Endoribonuclease YbeY (Prochlorococcus marinus (strain MIT 9312)).